Consider the following 77-residue polypeptide: Fungal protease inhibitor F (77 aa).

Positions 1-22 (MASKNLFVLFFIFALFAANIAA) are cleaved as a signal peptide. 4 cysteine pairs are disulfide-bonded: Cys-25-Cys-57, Cys-36-Cys-49, Cys-40-Cys-77, and Cys-59-Cys-71.

It belongs to the protease inhibitor I40 family. In terms of tissue distribution, hemolymph.

It localises to the secreted. Highly specific for fungal protease and subtilisin. The polypeptide is Fungal protease inhibitor F (Bombyx mori (Silk moth)).